We begin with the raw amino-acid sequence, 210 residues long: Nucleoside triphosphate pyrophosphatase (210 aa).

D79 serves as the catalytic Proton acceptor.

Belongs to the Maf family. It depends on a divalent metal cation as a cofactor.

It localises to the cytoplasm. The enzyme catalyses a ribonucleoside 5'-triphosphate + H2O = a ribonucleoside 5'-phosphate + diphosphate + H(+). The catalysed reaction is a 2'-deoxyribonucleoside 5'-triphosphate + H2O = a 2'-deoxyribonucleoside 5'-phosphate + diphosphate + H(+). Nucleoside triphosphate pyrophosphatase. May have a dual role in cell division arrest and in preventing the incorporation of modified nucleotides into cellular nucleic acids. The protein is Nucleoside triphosphate pyrophosphatase of Mycolicibacterium paratuberculosis (strain ATCC BAA-968 / K-10) (Mycobacterium paratuberculosis).